An 800-amino-acid polypeptide reads, in one-letter code: Endonuclease MutS2 (800 aa).

336–343 (GPNTGGKT) contributes to the ATP binding site. The region spanning 725–800 (LDLRGVRYEA…GDGATIVELK (76 aa)) is the Smr domain.

The protein belongs to the DNA mismatch repair MutS family. MutS2 subfamily. Homodimer. Binds to stalled ribosomes, contacting rRNA.

Its function is as follows. Endonuclease that is involved in the suppression of homologous recombination and thus may have a key role in the control of bacterial genetic diversity. In terms of biological role, acts as a ribosome collision sensor, splitting the ribosome into its 2 subunits. Detects stalled/collided 70S ribosomes which it binds and splits by an ATP-hydrolysis driven conformational change. Acts upstream of the ribosome quality control system (RQC), a ribosome-associated complex that mediates the extraction of incompletely synthesized nascent chains from stalled ribosomes and their subsequent degradation. Probably generates substrates for RQC. The chain is Endonuclease MutS2 from Leuconostoc mesenteroides subsp. mesenteroides (strain ATCC 8293 / DSM 20343 / BCRC 11652 / CCM 1803 / JCM 6124 / NCDO 523 / NBRC 100496 / NCIMB 8023 / NCTC 12954 / NRRL B-1118 / 37Y).